Consider the following 121-residue polypeptide: Large ribosomal subunit protein eL18 (121 aa).

This sequence belongs to the eukaryotic ribosomal protein eL18 family.

The polypeptide is Large ribosomal subunit protein eL18 (Methanoregula boonei (strain DSM 21154 / JCM 14090 / 6A8)).